The following is a 147-amino-acid chain: Hemoglobin subunit deltaH (147 aa).

The Globin domain occupies 3-147 (RLTDSEKAEV…MANALAHKYH (145 aa)). Heme b is bound by residues histidine 64 and histidine 93.

It belongs to the globin family. As to quaternary structure, heterotetramer of two delta chains and two alpha chains. Red blood cells.

This is Hemoglobin subunit deltaH from Procavia capensis (Rock hyrax).